A 153-amino-acid polypeptide reads, in one-letter code: Large ribosomal subunit protein uL15 (153 aa).

Residues 15-42 are disordered; sequence ARRIVGRGSSSGRGTTSGRGTKGQQARA. Over residues 23 to 35 the composition is skewed to gly residues; sequence SSSGRGTTSGRGT.

Belongs to the universal ribosomal protein uL15 family. Part of the 50S ribosomal subunit.

Functionally, binds to the 23S rRNA. The polypeptide is Large ribosomal subunit protein uL15 (Treponema pallidum (strain Nichols)).